A 639-amino-acid chain; its full sequence is 3-hydroxybenzoate 4-monooxygenase (639 aa).

FAD is bound by residues 34–64, Q73, V166, N212, 269–271, Y317, D349, and S365; these read DVLIVGCGPAGLTLAAQLAAFPDIRTCIVEQ and RFY.

Belongs to the PheA/TfdB FAD monooxygenase family. As to quaternary structure, homodimer. It depends on FAD as a cofactor.

The enzyme catalyses 3-hydroxybenzoate + NADPH + O2 + H(+) = 3,4-dihydroxybenzoate + NADP(+) + H2O. Converts 3-hydroxybenzoate (m-hydroxybenzoate), and to a lesser extent p-hydroxybenzoate, to 3,4-dihydroxybenzoate (protocatechuate). Also acts on a number of analogs of 3-hydroxybenzoate substituted in the 2, 4, 5 and 6 positions. The protein is 3-hydroxybenzoate 4-monooxygenase (mobA) of Comamonas testosteroni (Pseudomonas testosteroni).